A 288-amino-acid chain; its full sequence is Bifunctional protein FolD 1 (288 aa).

NADP(+) contacts are provided by residues 170-172 (GPG) and Ile-236.

Belongs to the tetrahydrofolate dehydrogenase/cyclohydrolase family. As to quaternary structure, homodimer.

The enzyme catalyses (6R)-5,10-methylene-5,6,7,8-tetrahydrofolate + NADP(+) = (6R)-5,10-methenyltetrahydrofolate + NADPH. It carries out the reaction (6R)-5,10-methenyltetrahydrofolate + H2O = (6R)-10-formyltetrahydrofolate + H(+). It participates in one-carbon metabolism; tetrahydrofolate interconversion. Catalyzes the oxidation of 5,10-methylenetetrahydrofolate to 5,10-methenyltetrahydrofolate and then the hydrolysis of 5,10-methenyltetrahydrofolate to 10-formyltetrahydrofolate. This Deinococcus geothermalis (strain DSM 11300 / CIP 105573 / AG-3a) protein is Bifunctional protein FolD 1.